The primary structure comprises 397 residues: FAD-dependent monooxygenase trt8 (397 aa).

The active site involves Tyr-53. Asp-145 and Ala-158 together coordinate FAD.

This sequence belongs to the paxM FAD-dependent monooxygenase family. FAD is required as a cofactor.

It participates in secondary metabolite biosynthesis; terpenoid biosynthesis. In terms of biological role, FAD-dependent monooxygenase; part of the gene cluster that mediates the biosynthesis of terretonin, a fungal meroterpenoid that acts as a mycotoxin. The first step of the pathway is the synthesis of 3,5-dimethylorsellinic acid (DMOA) by the polyketide synthase trt4. DMOA is then prenylated into farnesyl-DMOA by the polyprenyl transferase trt2. Methylation by the methyltransferase trt5 then leads to farnesyl-DMOA methyl ester which is further subject to epoxidation by the FAD-dependent monooxygenase trt8 to yield epoxyfarnesyl-DMOA methyl ester. Cyclization of epoxyfarnesyl-DMOA methyl ester by the terpene cyclase trt1 leads to a tetracycle intermediate which is in turn converted to preterretonin. Dehydrogenase trt9 comes next to transform preterretonin to preterrenoid. The FAD-dependent monooxygenase trt3 is then required for the C-hydroxylation at C16 of preterrenoid to yield terrenoid. The cytochrome P450 trt6 catalyzes three successive oxidations to transform terrenoid into an unstable intermediate, which then undergoes the D-ring expansion and unusual rearrangement of the methoxy group to afford the core skeleton of terretonin. Trt14 catalyzes the D-ring expansion of terretonin involving intramolecular methoxy rearrangement as well as the hydrolysis of the expanded D-ring and the methyl ester moiety. Finally, the nonheme iron-dependent dioxygenase trt7 accomplishes the last two oxidation reactions steps to complete the biosynthesis of terretonin. Terretonin C is produced via spontaneous decarboxylation of the terretonin precursor. Another shunt product of the terretonin biosynthesis is dihydrofarnesyl-DMOA, derived from epoxyfarnesyl-DMOA through hydrolysis of the epoxide. This chain is FAD-dependent monooxygenase trt8, found in Aspergillus terreus (strain NIH 2624 / FGSC A1156).